We begin with the raw amino-acid sequence, 301 residues long: Nucleotide-binding protein MAB_2783c (301 aa).

Residue 24-31 (GLSGAGRG) participates in ATP binding. 75 to 78 (DVRS) lines the GTP pocket.

It belongs to the RapZ-like family.

Its function is as follows. Displays ATPase and GTPase activities. This Mycobacteroides abscessus (strain ATCC 19977 / DSM 44196 / CCUG 20993 / CIP 104536 / JCM 13569 / NCTC 13031 / TMC 1543 / L948) (Mycobacterium abscessus) protein is Nucleotide-binding protein MAB_2783c.